The primary structure comprises 666 residues: Phosphoenolpyruvate carboxykinase (ATP) (666 aa).

Disordered regions lie at residues Met-1–Pro-68 and Ala-91–Ala-132. The span at Ala-48–Thr-58 shows a compositional bias: polar residues. A compositionally biased stretch (low complexity) spans Lys-109 to Ala-123. Gly-364–Thr-371 serves as a coordination point for ATP.

This sequence belongs to the phosphoenolpyruvate carboxykinase (ATP) family.

The protein resides in the cytoplasm. It carries out the reaction oxaloacetate + ATP = phosphoenolpyruvate + ADP + CO2. It participates in carbohydrate biosynthesis; gluconeogenesis. The chain is Phosphoenolpyruvate carboxykinase (ATP) from Zea mays (Maize).